We begin with the raw amino-acid sequence, 539 residues long: Hydroxylamine reductase (539 aa).

4 residues coordinate [4Fe-4S] cluster: cysteine 3, cysteine 6, cysteine 15, and cysteine 21. Hybrid [4Fe-2O-2S] cluster is bound by residues histidine 235, glutamate 259, cysteine 303, cysteine 394, cysteine 422, cysteine 447, glutamate 482, and lysine 484. Cysteine 394 is subject to Cysteine persulfide.

It belongs to the HCP family. [4Fe-4S] cluster is required as a cofactor. The cofactor is hybrid [4Fe-2O-2S] cluster.

It is found in the cytoplasm. It carries out the reaction A + NH4(+) + H2O = hydroxylamine + AH2 + H(+). Catalyzes the reduction of hydroxylamine to form NH(3) and H(2)O. This chain is Hydroxylamine reductase, found in Methanocaldococcus jannaschii (strain ATCC 43067 / DSM 2661 / JAL-1 / JCM 10045 / NBRC 100440) (Methanococcus jannaschii).